The primary structure comprises 128 residues: Large ribosomal subunit protein bL12 (128 aa).

This sequence belongs to the bacterial ribosomal protein bL12 family. Homodimer. Part of the ribosomal stalk of the 50S ribosomal subunit. Forms a multimeric L10(L12)X complex, where L10 forms an elongated spine to which 2 to 4 L12 dimers bind in a sequential fashion. Binds GTP-bound translation factors.

Its function is as follows. Forms part of the ribosomal stalk which helps the ribosome interact with GTP-bound translation factors. Is thus essential for accurate translation. The polypeptide is Large ribosomal subunit protein bL12 (Synechocystis sp. (strain ATCC 27184 / PCC 6803 / Kazusa)).